The following is an 874-amino-acid chain: Pyruvate, phosphate dikinase (874 aa).

Residues Ala-2 to Lys-340 are N-terminal. Residue Arg-92 participates in ATP binding. Positions Lys-340–Ser-399 are linker 1. Positions Pro-400–Leu-498 are central. Thr-453 is modified (phosphothreonine; by PDRP1). The active-site Tele-phosphohistidine intermediate is the His-455. A linker 2 region spans residues Asp-499–Thr-533. The C-terminal stretch occupies residues Leu-534–Lys-874. Substrate is bound by residues Arg-561, Arg-617, Glu-745, Gly-766, Thr-767, Asn-768, and Asp-769. Glu-745 serves as a coordination point for Mg(2+). Asp-769 is a Mg(2+) binding site. Cys-831 (proton donor) is an active-site residue.

It belongs to the PEP-utilizing enzyme family. Homodimer. Mg(2+) serves as cofactor. Post-translationally, phosphorylation of Thr-453 in the dark inactivates the enzyme. Dephosphorylation upon light stimulation reactivates the enzyme.

The enzyme catalyses pyruvate + phosphate + ATP = phosphoenolpyruvate + AMP + diphosphate + H(+). Its activity is regulated as follows. Activated by light-induced dephosphorylation. Inhibited by dark-induced phosphorylation. Both reactions are catalyzed by PDRP1. In terms of biological role, catalyzes the reversible phosphorylation of pyruvate and phosphate. In E.histolytica and C.symbiosus, PPDK functions in the direction of ATP synthesis. The chain is Pyruvate, phosphate dikinase (ppdK) from Clostridium symbiosum (Bacteroides symbiosus).